Reading from the N-terminus, the 1816-residue chain is Laminin subunit alpha-4 (1816 aa).

A signal peptide spans 1–24 (MGWSTAWCSVLALWLLWCAVCSNA). Residue S39 is glycosylated (O-linked (Xyl...) (chondroitin sulfate) serine). Cystine bridges form between C82–C91, C84–C98, C101–C110, C113–C129, C132–C146, C134–C155, C157–C166, C169–C184, C187–C202, C189–C209, C212–C221, and C224–C238. Laminin EGF-like domains follow at residues 82–131 (CDCN…FCQP), 132–186 (CPCP…TCKK), and 187–240 (CDCS…NCAV). A glycan (N-linked (GlcNAc...) asparagine) is linked at N104. A glycan (N-linked (GlcNAc...) asparagine) is linked at N215. One can recognise a Laminin EGF-like 4; truncated domain in the interval 241-255 (CNCGGGPCDSVTGEC). Positions 256 to 825 (LEEGFEVPTG…AQTRSVASKI (570 aa)) are domain II and I. 8 N-linked (GlcNAc...) asparagine glycosylation sites follow: N308, N333, N458, N550, N571, N574, N631, and N639. Residues 431–523 (THRELVDEEA…ERVKEQMEVV (93 aa)) adopt a coiled-coil conformation. Residues 556 to 604 (AEIDGAKNELQGKLSNLSNLSHDLVQEATDHAYNLQQEADELSRNLHSS) are a coiled coil. Residues 655–717 (IIYHKDESDN…AVKQLQAAER (63 aa)) are a coiled coil. Positions 717 to 719 (RGD) match the Cell attachment site motif. 5 N-linked (GlcNAc...) asparagine glycosylation sites follow: N735, N751, N754, N780, and N803. Positions 770–799 (AVDSARDAVRNLTEVVPQLLDQLRTVEQKR) form a coiled coil. Laminin G-like domains lie at 826 to 1030 (QVSM…SVPC), 1042 to 1222 (AASY…GYGC), and 1229 to 1397 (SRRA…LYEC). The cysteines at positions 1000 and 1030 are disulfide-linked. Residue N1088 is glycosylated (N-linked (GlcNAc...) asparagine). A disulfide bridge connects residues C1196 and C1222. Residues N1283 and N1361 are each glycosylated (N-linked (GlcNAc...) asparagine). A disulfide bridge connects residues C1365 and C1397. Residues 1409-1419 (KKGKNSSKPKT) are compositionally biased toward basic residues. A disordered region spans residues 1409–1433 (KKGKNSSKPKTNKQGEKSKDAPSWD). Positions 1421-1430 (KQGEKSKDAP) are enriched in basic and acidic residues. 2 consecutive Laminin G-like domains span residues 1462 to 1633 (AYQY…VTPC) and 1640 to 1813 (TGTY…INSC). Disulfide bonds link C1610/C1633 and C1785/C1813.

In terms of assembly, laminin is a complex glycoprotein, consisting of three different polypeptide chains (alpha, beta, gamma), which are bound to each other by disulfide bonds into a cross-shaped molecule comprising one long and three short arms with globules at each end. Alpha-4 is a subunit of laminin-8 (laminin-411), laminin-9 (laminin-421) and laminin-14 (laminin-423). As to expression, strongly expressed in peripheral nerves, cardiac muscle, fat, dermis, lung stroma, aortic endothelium, endocardium and endothelium of blood vessels in skin and brain.

Its subcellular location is the secreted. It localises to the extracellular space. The protein localises to the extracellular matrix. It is found in the basement membrane. Its function is as follows. Binding to cells via a high affinity receptor, laminin is thought to mediate the attachment, migration and organization of cells into tissues during embryonic development by interacting with other extracellular matrix components. The protein is Laminin subunit alpha-4 (Lama4) of Mus musculus (Mouse).